A 178-amino-acid chain; its full sequence is Inner membrane-spanning protein YciB (178 aa).

5 helical membrane-spanning segments follow: residues 22-42 (IFVA…VSWL), 50-70 (MALF…ALHN), 76-96 (WKVT…HWFM), 121-141 (IAWA…AFWL), and 149-169 (FKVF…GIYI).

The protein belongs to the YciB family.

The protein resides in the cell inner membrane. Its function is as follows. Plays a role in cell envelope biogenesis, maintenance of cell envelope integrity and membrane homeostasis. The polypeptide is Inner membrane-spanning protein YciB (Erwinia tasmaniensis (strain DSM 17950 / CFBP 7177 / CIP 109463 / NCPPB 4357 / Et1/99)).